The following is a 483-amino-acid chain: Jacalin-related lectin 13 (483 aa).

The segment at 1 to 20 (MTQKLESVGSERKSSEYMWD) is disordered. Jacalin-type lectin domains follow at residues 2 to 147 (TQKL…YVTW), 150 to 295 (PARM…YFTT), and 307 to 461 (FREK…YFFP).

This sequence belongs to the jacalin lectin family.

This chain is Jacalin-related lectin 13 (JAL13), found in Arabidopsis thaliana (Mouse-ear cress).